The following is a 162-amino-acid chain: Protein-export protein SecB (162 aa).

The protein belongs to the SecB family. Homotetramer, a dimer of dimers. One homotetramer interacts with 1 SecA dimer.

It is found in the cytoplasm. Functionally, one of the proteins required for the normal export of preproteins out of the cell cytoplasm. It is a molecular chaperone that binds to a subset of precursor proteins, maintaining them in a translocation-competent state. It also specifically binds to its receptor SecA. In Legionella pneumophila (strain Paris), this protein is Protein-export protein SecB.